The sequence spans 184 residues: Casparian strip membrane protein 1 (184 aa).

The Cytoplasmic segment spans residues 1-24; the sequence is MKESGEHGETSKAPLNRGVSKGLS. Residues 25 to 45 form a helical membrane-spanning segment; it reads VLDLILRFIAIIGTLASAIAM. Topologically, residues 46 to 72 are extracellular; the sequence is GTTNETLPFFTQFIRFKAQYSDLPTLT. N-linked (GlcNAc...) asparagine glycosylation occurs at Asn-49. A helical transmembrane segment spans residues 73–93; it reads FFVVANSIVCAYLILSLPLSI. Topologically, residues 94 to 105 are cytoplasmic; the sequence is VHIIRSRAKFSR. The chain crosses the membrane as a helical span at residues 106–126; that stretch reads LLLIFLDAVMLALVTAGASAA. The Extracellular segment spans residues 127 to 159; the sequence is AAIVYLAHKGNVRANWLAICQQFDSFCERISGS. A helical transmembrane segment spans residues 160–180; it reads LIGSFGAMVVLILLILLSAIA. Over 181 to 184 the chain is Cytoplasmic; sequence LARR.

Belongs to the Casparian strip membrane proteins (CASP) family. As to quaternary structure, homodimer and heterodimers.

It localises to the cell membrane. In terms of biological role, regulates membrane-cell wall junctions and localized cell wall deposition. Required for establishment of the Casparian strip membrane domain (CSD) and the subsequent formation of Casparian strips, a cell wall modification of the root endodermis that determines an apoplastic barrier between the intraorganismal apoplasm and the extraorganismal apoplasm and prevents lateral diffusion. The sequence is that of Casparian strip membrane protein 1 from Panicum virgatum (Blackwell switchgrass).